Reading from the N-terminus, the 115-residue chain is MNPLIQSLTEGQLRTDIPSFRPGDTVRVHAKVVEGTRERIQIFEGVVISRKGQGISEMYTVRKISSGIGVERTFPIHTPRVDKIEVVRYGKVRRAKLYYLRALQGKAARIKEIRK.

The protein belongs to the bacterial ribosomal protein bL19 family.

In terms of biological role, this protein is located at the 30S-50S ribosomal subunit interface and may play a role in the structure and function of the aminoacyl-tRNA binding site. The polypeptide is Large ribosomal subunit protein bL19 (Streptococcus thermophilus (strain CNRZ 1066)).